The following is a 479-amino-acid chain: 3-phytase B (479 aa).

An N-terminal signal peptide occupies residues 1 to 19; that stretch reads MPRTSLLTLACALATGASA. Disulfide bonds link Cys71–Cys387, Cys128–Cys472, Cys216–Cys441, Cys225–Cys298, and Cys413–Cys421. Catalysis depends on His82, which acts as the Nucleophile. N-linked (GlcNAc...) asparagine glycosylation is present at Asn191. Asn315 carries an N-linked (GlcNAc...) asparagine glycan. Asp338 functions as the Proton donor in the catalytic mechanism. The N-linked (GlcNAc...) asparagine glycan is linked to Asn458.

This sequence belongs to the histidine acid phosphatase family. In terms of assembly, homodimer.

It carries out the reaction 1D-myo-inositol hexakisphosphate + H2O = 1D-myo-inositol 1,2,4,5,6-pentakisphosphate + phosphate. Its function is as follows. Catalyzes the hydrolysis of inorganic orthophosphate from phytate. This Aspergillus awamori (Black koji mold) protein is 3-phytase B (phyB).